The chain runs to 353 residues: Transcription termination/antitermination protein NusG (353 aa).

Residues 301–335 (VGDMVKIISGPFEDFAGVIKEIDPERQELKVNVTI) form the KOW domain.

It belongs to the NusG family.

With respect to regulation, regulated by autoinhibition via interaction of the N-terminal and the C-terminal domains. Autoinhibition may prevent NusG from interacting prematurely with other components of the transcription complex or non-specific interactions with other cellular components. In terms of biological role, participates in transcription elongation, termination and antitermination. In Thermotoga maritima (strain ATCC 43589 / DSM 3109 / JCM 10099 / NBRC 100826 / MSB8), this protein is Transcription termination/antitermination protein NusG.